Consider the following 1157-residue polypeptide: ATP-dependent helicase/deoxyribonuclease subunit B (1157 aa).

Positions 1 to 278 constitute a UvrD-like helicase ATP-binding domain; sequence MTLQIIAGRS…FFLENKRAKT (278 aa). Position 8–15 (8–15) interacts with ATP; that stretch reads GRSGTGKT. A UvrD-like helicase C-terminal domain is found at 272–590; sequence ENKRAKTESL…VLSDMENAKL (319 aa). Residues C794, C1115, C1118, and C1124 each contribute to the [4Fe-4S] cluster site.

This sequence belongs to the helicase family. AddB/RexB type 1 subfamily. As to quaternary structure, heterodimer of AddA and AddB. Requires Mg(2+) as cofactor. It depends on [4Fe-4S] cluster as a cofactor.

Functionally, the heterodimer acts as both an ATP-dependent DNA helicase and an ATP-dependent, dual-direction single-stranded exonuclease. Recognizes the chi site generating a DNA molecule suitable for the initiation of homologous recombination. The AddB subunit has 5' -&gt; 3' nuclease activity but not helicase activity. This is ATP-dependent helicase/deoxyribonuclease subunit B from Listeria monocytogenes serotype 4a (strain HCC23).